The sequence spans 120 residues: MFLLHEYDIFWTFLIIASLIPILAFSISGLLAPVSEGPEKLSSYESGIEPMGGAWVQFRIRYYMFALVFVVFDVETVFLYPWAMSFDVLGVSVFIEALIFVLILVVGLVYAWRKGALEWS.

3 consecutive transmembrane segments (helical) span residues 9 to 29 (IFWTFLIIASLIPILAFSISG), 64 to 84 (MFALVFVVFDVETVFLYPWAM), and 88 to 108 (VLGVSVFIEALIFVLILVVGL).

Belongs to the complex I subunit 3 family. In terms of assembly, NDH is composed of at least 16 different subunits, 5 of which are encoded in the nucleus.

It is found in the plastid. It localises to the chloroplast thylakoid membrane. The enzyme catalyses a plastoquinone + NADH + (n+1) H(+)(in) = a plastoquinol + NAD(+) + n H(+)(out). The catalysed reaction is a plastoquinone + NADPH + (n+1) H(+)(in) = a plastoquinol + NADP(+) + n H(+)(out). Its function is as follows. NDH shuttles electrons from NAD(P)H:plastoquinone, via FMN and iron-sulfur (Fe-S) centers, to quinones in the photosynthetic chain and possibly in a chloroplast respiratory chain. The immediate electron acceptor for the enzyme in this species is believed to be plastoquinone. Couples the redox reaction to proton translocation, and thus conserves the redox energy in a proton gradient. This Hordeum vulgare (Barley) protein is NAD(P)H-quinone oxidoreductase subunit 3, chloroplastic.